The following is a 155-amino-acid chain: Small ribosomal subunit protein uS7cz/uS7cy (155 aa).

Belongs to the universal ribosomal protein uS7 family. In terms of assembly, part of the 30S ribosomal subunit.

It localises to the plastid. It is found in the chloroplast. Functionally, one of the primary rRNA binding proteins, it binds directly to 16S rRNA where it nucleates assembly of the head domain of the 30S subunit. This is Small ribosomal subunit protein uS7cz/uS7cy (rps7-A) from Cucumis sativus (Cucumber).